A 178-amino-acid polypeptide reads, in one-letter code: Crossover junction endodeoxyribonuclease RuvC (178 aa).

Active-site residues include Asp7, Glu68, and Asp141. Mg(2+)-binding residues include Asp7, Glu68, and Asp141.

The protein belongs to the RuvC family. Homodimer which binds Holliday junction (HJ) DNA. The HJ becomes 2-fold symmetrical on binding to RuvC with unstacked arms; it has a different conformation from HJ DNA in complex with RuvA. In the full resolvosome a probable DNA-RuvA(4)-RuvB(12)-RuvC(2) complex forms which resolves the HJ. Requires Mg(2+) as cofactor.

The protein localises to the cytoplasm. The enzyme catalyses Endonucleolytic cleavage at a junction such as a reciprocal single-stranded crossover between two homologous DNA duplexes (Holliday junction).. The RuvA-RuvB-RuvC complex processes Holliday junction (HJ) DNA during genetic recombination and DNA repair. Endonuclease that resolves HJ intermediates. Cleaves cruciform DNA by making single-stranded nicks across the HJ at symmetrical positions within the homologous arms, yielding a 5'-phosphate and a 3'-hydroxyl group; requires a central core of homology in the junction. The consensus cleavage sequence is 5'-(A/T)TT(C/G)-3'. Cleavage occurs on the 3'-side of the TT dinucleotide at the point of strand exchange. HJ branch migration catalyzed by RuvA-RuvB allows RuvC to scan DNA until it finds its consensus sequence, where it cleaves and resolves the cruciform DNA. The protein is Crossover junction endodeoxyribonuclease RuvC of Parafrankia sp. (strain EAN1pec).